A 356-amino-acid chain; its full sequence is UDP-N-acetylglucosamine--N-acetylmuramyl-(pentapeptide) pyrophosphoryl-undecaprenol N-acetylglucosamine transferase (356 aa).

Residues 12–14 (TGG), asparagine 124, arginine 163, serine 188, isoleucine 242, 261–266 (ALTVSE), and glutamine 287 each bind UDP-N-acetyl-alpha-D-glucosamine.

Belongs to the glycosyltransferase 28 family. MurG subfamily.

Its subcellular location is the cell inner membrane. The enzyme catalyses di-trans,octa-cis-undecaprenyl diphospho-N-acetyl-alpha-D-muramoyl-L-alanyl-D-glutamyl-meso-2,6-diaminopimeloyl-D-alanyl-D-alanine + UDP-N-acetyl-alpha-D-glucosamine = di-trans,octa-cis-undecaprenyl diphospho-[N-acetyl-alpha-D-glucosaminyl-(1-&gt;4)]-N-acetyl-alpha-D-muramoyl-L-alanyl-D-glutamyl-meso-2,6-diaminopimeloyl-D-alanyl-D-alanine + UDP + H(+). It functions in the pathway cell wall biogenesis; peptidoglycan biosynthesis. Its function is as follows. Cell wall formation. Catalyzes the transfer of a GlcNAc subunit on undecaprenyl-pyrophosphoryl-MurNAc-pentapeptide (lipid intermediate I) to form undecaprenyl-pyrophosphoryl-MurNAc-(pentapeptide)GlcNAc (lipid intermediate II). The polypeptide is UDP-N-acetylglucosamine--N-acetylmuramyl-(pentapeptide) pyrophosphoryl-undecaprenol N-acetylglucosamine transferase (Pseudomonas fluorescens (strain SBW25)).